Here is a 512-residue protein sequence, read N- to C-terminus: MTQSALHTEFGGIAALRDALARRQVSAVELAQSGLDAAQAASGLNAFLHIDPDLTLAQARAADAALAAGTAGPLAGIPIAHKDAFVTRGWRTTAGSKMLAGYASPFDATVVERLAEAGAVSLGKLNCDEFAMGSGNENSAYGPVRNPWDTQAVPGGSSGGSAAAVAARLVAAATGTDTGGSVRQPAALCGVSGIKPTYGTVSRYGIIAFGSSLDQAGPLAPSSRDLLELLDVMTGFDPRDATSLQACDGQANESGRVRRGHDAAQAGYDAAGSQPLKGLRIGVPQEYFGAGLAPDVAAAVEAALAQFEQLGAVRVPVSLPRTELAIPAYYVIAPAEASSNLARYDGVRYGHRAAQYGDLNEMISRSRAEGFGDEVKRRILIGTYVLSHGYYDAYYLQAQRLRRLIAQDFQRAFAGQCDVIMGPVSPTVAKNIGDNRDDPTADWLADVYTLGVSLAGLPAMSVPCGFGGQDGRRPVGLQIIGNYFDEGRLLALADRYQQVTDWHQRAPVSQDA.

Catalysis depends on charge relay system residues Lys82 and Ser157. Ser181 acts as the Acyl-ester intermediate in catalysis.

This sequence belongs to the amidase family. GatA subfamily. Heterotrimer of A, B and C subunits.

The catalysed reaction is L-glutamyl-tRNA(Gln) + L-glutamine + ATP + H2O = L-glutaminyl-tRNA(Gln) + L-glutamate + ADP + phosphate + H(+). Functionally, allows the formation of correctly charged Gln-tRNA(Gln) through the transamidation of misacylated Glu-tRNA(Gln) in organisms which lack glutaminyl-tRNA synthetase. The reaction takes place in the presence of glutamine and ATP through an activated gamma-phospho-Glu-tRNA(Gln). This Bordetella pertussis (strain Tohama I / ATCC BAA-589 / NCTC 13251) protein is Glutamyl-tRNA(Gln) amidotransferase subunit A.